The sequence spans 405 residues: Serpin I2 (405 aa).

The signal sequence occupies residues 1–18 (MNKTILWSFLLFFSGSQT). N-linked (GlcNAc...) asparagine glycosylation occurs at Asn306.

The protein belongs to the serpin family. In terms of tissue distribution, expressed in pancreas.

The protein resides in the secreted. This is Serpin I2 (Serpini2) from Mus musculus (Mouse).